We begin with the raw amino-acid sequence, 388 residues long: Nuclear hormone receptor family member nhr-16 (388 aa).

Residues 11-86 (FLKCAICQES…VGMNPAGVQQ (76 aa)) constitute a DNA-binding region (nuclear receptor). 2 consecutive NR C4-type zinc fingers follow at residues 14-34 (CAIC…CRAC) and 50-74 (CQGN…YIKC). The NR LBD domain occupies 115–387 (PPSSLMLHIP…DEFYNLMSGR (273 aa)).

Belongs to the nuclear hormone receptor family.

Its subcellular location is the nucleus. Its function is as follows. Orphan nuclear receptor. In Caenorhabditis elegans, this protein is Nuclear hormone receptor family member nhr-16 (nhr-16).